Consider the following 352-residue polypeptide: N-acetyl-gamma-glutamyl-phosphate reductase (352 aa).

Residue cysteine 155 is part of the active site.

Belongs to the NAGSA dehydrogenase family. Type 1 subfamily.

It is found in the cytoplasm. The catalysed reaction is N-acetyl-L-glutamate 5-semialdehyde + phosphate + NADP(+) = N-acetyl-L-glutamyl 5-phosphate + NADPH + H(+). The protein operates within amino-acid biosynthesis; L-arginine biosynthesis; N(2)-acetyl-L-ornithine from L-glutamate: step 3/4. Functionally, catalyzes the NADPH-dependent reduction of N-acetyl-5-glutamyl phosphate to yield N-acetyl-L-glutamate 5-semialdehyde. The polypeptide is N-acetyl-gamma-glutamyl-phosphate reductase (Cyanothece sp. (strain PCC 7425 / ATCC 29141)).